The chain runs to 26 residues: PRKCH upstream open reading frame 2 (26 aa).

As to quaternary structure, interacts with protein kinase C eta as well as other protein kinases including PRKCD, PRKCQ and PRKCE but not with PRKCG or PRKCZ; the interactions lead to inhibition of kinase activity.

Its function is as follows. Product of an upstream open reading frame (ORF) of PRKCH which regulates translation of the downstream protein kinase C eta (PKC-eta) ORF. Functions as a repressive element that maintains low basal levels of PKC-eta in growing cells but enhances its expression during stress conditions induced by amino acid starvation in a EIF2AK4/GCN2-dependent manner. In addition to its role in regulating PKC-eta translation, also inhibits the kinase activity of PKC-eta as well as other protein kinases including PRKCD, PRKCQ and PRKCE but not PRKCA, PRKCG or PRKCZ. In Homo sapiens (Human), this protein is PRKCH upstream open reading frame 2.